A 1321-amino-acid polypeptide reads, in one-letter code: Bile salt export pump (1321 aa).

Residues 1-62 are Cytoplasmic-facing; the sequence is MSDSVILRSV…FSSSKDIWLM (62 aa). One can recognise an ABC transmembrane type-1 1 domain in the interval 62–385; that stretch reads MLMGGVCALL…ASSCLEIFST (324 aa). Residues 63-83 traverse the membrane as a helical segment; it reads LMGGVCALLHGMAQPGILIIF. Residues 84 to 147 lie on the Extracellular side of the membrane; that stretch reads GIMTDIFIKY…MIKFSGIYAG (64 aa). 4 N-linked (GlcNAc...) asparagine glycosylation sites follow: asparagine 109, asparagine 116, asparagine 122, and asparagine 125. Residues 148–168 traverse the membrane as a helical segment; that stretch reads VGMTVLILGYFQIRLWVITGA. Residues 169-215 are Cytoplasmic-facing; it reads RQIRRMRKIYFRRIMRMEIGWFDCTSVGELNSRFADDIEKINDAIAD. A helical membrane pass occupies residues 216–236; that stretch reads QLAHFLQRMSTAMCGLLLGFY. Over 237 to 240 the chain is Extracellular; that stretch reads RGWK. Residues 241–261 traverse the membrane as a helical segment; the sequence is LTLVILAVSPLIGIGAAVIGL. Residues 262–319 lie on the Cytoplasmic side of the membrane; that stretch reads SIAKFTELELKAYAKAGSIADEVLSSIRTVAAFGGENKEVERYEKNLVFAQRWGIWKG. A helical transmembrane segment spans residues 320–340; it reads MVMGFFTGYMWCLIFFCYALA. Residues 341–353 are Extracellular-facing; that stretch reads FWYGSTLVLDEEE. The helical transmembrane segment at 354-374 threads the bilayer; sequence YTPGTLVQIFLCVILAAMNIG. Residues 375–755 lie on the Cytoplasmic side of the membrane; sequence HASSCLEIFS…KYNIPEWHYI (381 aa). An ABC transporter 1 domain is found at 420-656; the sequence is IEFHNVTFHY…KGVYFMLVTL (237 aa). 455–462 provides a ligand contact to ATP; sequence GSSGAGKS. Residue threonine 586 is modified to Phosphothreonine. A Phosphoserine modification is found at serine 587. The segment at 651 to 674 is interaction with HAX1; sequence FMLVTLQSQGDNAHKETSIMGKDA. Residues serine 692, serine 703, and serine 706 each carry the phosphoserine modification. The ABC transmembrane type-1 2 domain maps to 755–1043; sequence ILVGSLSAAI…TFSYTPSYAK (289 aa). The chain crosses the membrane as a helical span at residues 756-776; the sequence is LVGSLSAAINGAVTPIYSLLF. At 777–794 the chain is on the extracellular side; it reads SQLLGTFSLLDKEQQRSE. Residues 795–815 form a helical membrane-spanning segment; it reads IHSMCLFFVILGCVSIFTQFL. The Cytoplasmic portion of the chain corresponds to 816-869; sequence QGYTFAKSGELLTKRLRKFGFKAMLGQDIGWFDDLRNNPGVLTTRLATDASQVQ. 2 helical membrane-spanning segments follow: residues 870–890 and 891–911; these read GATG…IAAL and LIAF…FPFL. The Cytoplasmic portion of the chain corresponds to 912-979; sequence ALSGAVQTKM…SYKTAVRKAN (68 aa). A helical membrane pass occupies residues 980-1000; that stretch reads IYGLCFAFSQGIAFLANSAAY. Residues 1001–1011 lie on the Extracellular side of the membrane; the sequence is RYGGYLIAYEG. Residues 1012-1032 traverse the membrane as a helical segment; that stretch reads LGFSHVFRVVSSVALSATAVG. The Cytoplasmic segment spans residues 1033–1321; it reads RTFSYTPSYA…KLVITGAPIS (289 aa). Residues 1078 to 1316 enclose the ABC transporter 2 domain; that stretch reads IDFIDCKFTY…KGAYYKLVIT (239 aa). Position 1113-1120 (1113-1120) interacts with ATP; sequence GSSGCGKS. Residue serine 1321 is modified to Phosphoserine.

Belongs to the ABC transporter superfamily. ABCB family. Multidrug resistance exporter (TC 3.A.1.201) subfamily. As to quaternary structure, interacts with HAX1. Interacts with the adapter protein complex 2 (AP-2) throught AP2A2 or AP2A1; this interaction regulates cell membrane expression of ABCB11 through its internalization in a clathrin-dependent manner and its subsequent degradation. Post-translationally, ubiquitinated; short-chain ubiquitination regulates cell-Surface expression of ABCB11. In terms of processing, N-glycosylated. In terms of tissue distribution, expressed predominantly, if not exclusively in the liver, where it was further localized to the canalicular microvilli and to subcanalicular vesicles of the hepatocytes by in situ.

The protein localises to the apical cell membrane. It is found in the recycling endosome membrane. The protein resides in the endosome. It localises to the cell membrane. It catalyses the reaction cholate(in) + ATP + H2O = cholate(out) + ADP + phosphate + H(+). The enzyme catalyses taurocholate(in) + ATP + H2O = taurocholate(out) + ADP + phosphate + H(+). The catalysed reaction is glycocholate(in) + ATP + H2O = glycocholate(out) + ADP + phosphate + H(+). It carries out the reaction glycochenodeoxycholate(in) + ATP + H2O = glycochenodeoxycholate(out) + ADP + phosphate + H(+). It catalyses the reaction taurochenodeoxycholate(in) + ATP + H2O = taurochenodeoxycholate(out) + ADP + phosphate + H(+). The enzyme catalyses glycoursodeoxycholate(in) + ATP + H2O = glycoursodeoxycholate(out) + ADP + phosphate + H(+). The catalysed reaction is tauroursodeoxycholate(in) + ATP + H2O = tauroursodeoxycholate(out) + ADP + phosphate + H(+). It carries out the reaction taurodeoxycholate(in) + ATP + H2O = taurodeoxycholate(out) + ADP + phosphate + H(+). It catalyses the reaction pravastatin(in) + ATP + H2O = pravastatin(out) + ADP + phosphate + H(+). With respect to regulation, the uptake of taurocholate is inhibited by taurolithocholate sulfate with an IC(50) of 52.9 uM. Pravastatin competitively inhibits the transport of taurocholic acid. Cyclosporin A, glibenclamide, rifampicin and troglitazonestrongly competitively inhibit the transport activity of taurocholate. The canalicular transport activity of taurocholate is strongly dependent on canalicular membrane cholesterol content. The uptake of taurocholate is increased by short- and medium-chain fatty acids. Cholesterol increases transport capacity of taurocholate without affecting the affinity for the substrate. Functionally, catalyzes the transport of the major hydrophobic bile salts, such as taurine and glycine-conjugated cholic acid across the canalicular membrane of hepatocytes in an ATP-dependent manner, therefore participates in hepatic bile acid homeostasis and consequently to lipid homeostasis through regulation of biliary lipid secretion in a bile salts dependent manner. Transports taurine-conjugated bile salts more rapidly than glycine-conjugated bile salts. Also transports non-bile acid compounds, such as pravastatin and fexofenadine in an ATP-dependent manner and may be involved in their biliary excretion. The protein is Bile salt export pump of Rattus norvegicus (Rat).